The following is a 624-amino-acid chain: tRNA uridine 5-carboxymethylaminomethyl modification enzyme MnmG (624 aa).

FAD-binding positions include 14 to 19 (GGGHAG), Val126, and Ser181. 273–287 (GPRYCPSIEDKVVRF) serves as a coordination point for NAD(+). Residue Gln370 coordinates FAD.

It belongs to the MnmG family. As to quaternary structure, homodimer. Heterotetramer of two MnmE and two MnmG subunits. FAD is required as a cofactor.

The protein localises to the cytoplasm. Its function is as follows. NAD-binding protein involved in the addition of a carboxymethylaminomethyl (cmnm) group at the wobble position (U34) of certain tRNAs, forming tRNA-cmnm(5)s(2)U34. In Geotalea uraniireducens (strain Rf4) (Geobacter uraniireducens), this protein is tRNA uridine 5-carboxymethylaminomethyl modification enzyme MnmG.